Here is a 245-residue protein sequence, read N- to C-terminus: 14-3-3 protein zeta (245 aa).

The protein belongs to the 14-3-3 family. Homodimer. In terms of tissue distribution, present in all adult tissues examined with the highest levels in the brain.

Its subcellular location is the cytoplasm. In terms of biological role, adapter protein implicated in the regulation of a large spectrum of both general and specialized signaling pathways. Binds to a large number of partners, usually by recognition of a phosphoserine or phosphothreonine motif. Binding generally results in the modulation of the activity of the binding partner. This is 14-3-3 protein zeta (ywhaz) from Xenopus laevis (African clawed frog).